A 727-amino-acid polypeptide reads, in one-letter code: 1,4-alpha-glucan branching enzyme GlgB (727 aa).

Asp405 serves as the catalytic Nucleophile. The active-site Proton donor is Glu458.

It belongs to the glycosyl hydrolase 13 family. GlgB subfamily. As to quaternary structure, monomer.

The catalysed reaction is Transfers a segment of a (1-&gt;4)-alpha-D-glucan chain to a primary hydroxy group in a similar glucan chain.. It participates in glycan biosynthesis; glycogen biosynthesis. Catalyzes the formation of the alpha-1,6-glucosidic linkages in glycogen by scission of a 1,4-alpha-linked oligosaccharide from growing alpha-1,4-glucan chains and the subsequent attachment of the oligosaccharide to the alpha-1,6 position. The chain is 1,4-alpha-glucan branching enzyme GlgB from Yersinia pseudotuberculosis serotype O:1b (strain IP 31758).